The following is a 249-amino-acid chain: Imidazole glycerol phosphate synthase subunit HisF (249 aa).

Active-site residues include aspartate 11 and aspartate 130.

The protein belongs to the HisA/HisF family. Heterodimer of HisH and HisF.

The protein resides in the cytoplasm. It catalyses the reaction 5-[(5-phospho-1-deoxy-D-ribulos-1-ylimino)methylamino]-1-(5-phospho-beta-D-ribosyl)imidazole-4-carboxamide + L-glutamine = D-erythro-1-(imidazol-4-yl)glycerol 3-phosphate + 5-amino-1-(5-phospho-beta-D-ribosyl)imidazole-4-carboxamide + L-glutamate + H(+). Its pathway is amino-acid biosynthesis; L-histidine biosynthesis; L-histidine from 5-phospho-alpha-D-ribose 1-diphosphate: step 5/9. IGPS catalyzes the conversion of PRFAR and glutamine to IGP, AICAR and glutamate. The HisF subunit catalyzes the cyclization activity that produces IGP and AICAR from PRFAR using the ammonia provided by the HisH subunit. The protein is Imidazole glycerol phosphate synthase subunit HisF of Sulfolobus acidocaldarius (strain ATCC 33909 / DSM 639 / JCM 8929 / NBRC 15157 / NCIMB 11770).